Here is a 963-residue protein sequence, read N- to C-terminus: MVSSRRGFNPIAFTPWPVTILTSLVYLALIIPIIVVHHLVPPAPKQSPPGVDLEEAWHDLQHLTRQYHPYNSHSNDEVHQWLLKRIRAISATTSARSESQGGPEVFVFDDNQTNLTFSSAGVAATAITGVYFESKNIVVYIRGTEDEPGEWWKSPDGEPSGKGGVLVNAHYDSVSTGYGATDNGVGVITTLQLLKYFTTPGHYPRKGLVLLFNNGEEDFLNGAYAYSQHPMSKFTHTFLNLEGAGAGGRAVLFRSTDTEITRFYGKSQHPFGTVLARDAFKLGFIRSETDYHVFDGVFGMRGLDVAFMEPRSRYHTDQDDARHTSIDSVWHMLSAAITTTEGLVSYTGNEFDGDSGEGGKLNNGVGTLGVWFDFFGSSLAVFQLNTLFGLSVALLVVAPLLLILTSVALFAVDKMYMFSMYTYLSESGGQVSLYGLRGMFRFPLILGISTALTVALAFLIMKVNPFIIYSSPYAVWSMMLSTCMFFAWFISCVADFARPSALHRAYAFSWMFGILWVFLVIATVYQRQHGIASSYFIVFYFAGVSVATWISYLELFGLSTTQDYARRQSRLSDRTPSSDSHLLAPSADELPSSGSVAGRDFNPEDVEDEEPTESTSLLRGQQRTTFANYASARGSQESNISNQGSSLLHPKNNRLEQKWSIYLVSSAWILQFLLVAPIVLILLGQLGLFLTSATYQIGADGGSQFIIYIGIAVLSVLILLPLFPFIHRFTYHIPTFMLFVLIGTLVYNLTAFPFSHNSRLKVAFVQEMDLGTGKNQASLVGVEPYIRDIVHAIPFVNDEEISCTSKGYGGRTKCSWPGLRPTVVDGPYKDWVTYNISQTKEDKTTRFEVSGKNTRACKLLFDSPISDFHVHGSVVDKRIPHTGSKGVSEVRLWSRNWENTWTVDVEWTKKSAERTGRVMCLWSDDNDLNLIPELDMIRKFAPWWVAITKLRDGLVEGSYSFKL.

Residues 1–15 (MVSSRRGFNPIAFTP) are Cytoplasmic-facing. Residues 16–36 (WPVTILTSLVYLALIIPIIVV) form a helical membrane-spanning segment. The Vacuolar portion of the chain corresponds to 37 to 391 (HHLVPPAPKQ…FQLNTLFGLS (355 aa)). N-linked (GlcNAc...) asparagine glycans are attached at residues N111 and N114. Zn(2+) is bound by residues H170 and D182. Catalysis depends on E216, which acts as the Proton acceptor. 3 residues coordinate Zn(2+): E217, E242, and H315. A helical membrane pass occupies residues 392 to 412 (VALLVVAPLLLILTSVALFAV). Topologically, residues 413 to 441 (DKMYMFSMYTYLSESGGQVSLYGLRGMFR) are cytoplasmic. Residues 442 to 462 (FPLILGISTALTVALAFLIMK) traverse the membrane as a helical segment. The Vacuolar segment spans residues 463 to 473 (VNPFIIYSSPY). A helical transmembrane segment spans residues 474–494 (AVWSMMLSTCMFFAWFISCVA). Residues 495–504 (DFARPSALHR) are Cytoplasmic-facing. The helical transmembrane segment at 505–525 (AYAFSWMFGILWVFLVIATVY) threads the bilayer. Residues 526–535 (QRQHGIASSY) are Vacuolar-facing. Residues 536-556 (FIVFYFAGVSVATWISYLELF) form a helical membrane-spanning segment. Topologically, residues 557-668 (GLSTTQDYAR…WSIYLVSSAW (112 aa)) are cytoplasmic. Positions 569–618 (SRLSDRTPSSDSHLLAPSADELPSSGSVAGRDFNPEDVEDEEPTESTSLL) are disordered. The span at 603-612 (PEDVEDEEPT) shows a compositional bias: acidic residues. A helical membrane pass occupies residues 669 to 689 (ILQFLLVAPIVLILLGQLGLF). At 690 to 705 (LTSATYQIGADGGSQF) the chain is on the vacuolar side. A helical membrane pass occupies residues 706–726 (IIYIGIAVLSVLILLPLFPFI). The Cytoplasmic segment spans residues 727-732 (HRFTYH). The chain crosses the membrane as a helical span at residues 733–753 (IPTFMLFVLIGTLVYNLTAFP). Topologically, residues 754 to 963 (FSHNSRLKVA…LVEGSYSFKL (210 aa)) are vacuolar. N835 is a glycosylation site (N-linked (GlcNAc...) asparagine).

Belongs to the peptidase M28 family. Requires Zn(2+) as cofactor.

It localises to the vacuole membrane. May be involved in vacuolar sorting and osmoregulation. The polypeptide is Vacuolar membrane protease (Arthroderma gypseum (strain ATCC MYA-4604 / CBS 118893) (Microsporum gypseum)).